The following is a 167-amino-acid chain: Kininogen-1 (167 aa).

The N-terminal stretch at 1–23 (MRLWFCLSFFIILCLEHFPGTLA) is a signal peptide.

The protein belongs to the bradykinin-related peptide family. Expressed by the skin glands.

It localises to the secreted. Vasodilator. Bradykinin produces in vitro relaxation of rat arterial smooth muscle and constriction of intestinal smooth muscle. May target bradykinin receptors (BDKRB). This is Kininogen-1 from Bombina orientalis (Oriental fire-bellied toad).